The chain runs to 268 residues: Tryptophan synthase alpha chain (268 aa).

Residues E49 and D60 each act as proton acceptor in the active site.

The protein belongs to the TrpA family. Tetramer of two alpha and two beta chains.

It carries out the reaction (1S,2R)-1-C-(indol-3-yl)glycerol 3-phosphate + L-serine = D-glyceraldehyde 3-phosphate + L-tryptophan + H2O. It participates in amino-acid biosynthesis; L-tryptophan biosynthesis; L-tryptophan from chorismate: step 5/5. Its function is as follows. The alpha subunit is responsible for the aldol cleavage of indoleglycerol phosphate to indole and glyceraldehyde 3-phosphate. This chain is Tryptophan synthase alpha chain, found in Haemophilus influenzae (strain ATCC 51907 / DSM 11121 / KW20 / Rd).